A 212-amino-acid chain; its full sequence is Dihydrophenazinedicarboxylate synthase (212 aa).

Ser-8 lines the substrate pocket. Residues 63–66 (RVIA) and 78–79 (CT) contribute to the FMN site. His-80 serves as a coordination point for substrate. Residues 84 to 85 (RK) and Gln-107 contribute to the FMN site. Substrate is bound by residues Arg-129 and Ser-137. Residues 142–143 (QS) and Arg-195 contribute to the FMN site.

The protein belongs to the pyridoxamine 5'-phosphate oxidase family. FMN serves as cofactor.

It catalyses the reaction (1R,6R)-1,4,5,5a,6,9-hexahydrophenazine-1,6-dicarboxylate + O2 = (1R,10aS)-1,4,10,10a-tetrahydrophenazine-1,6-dicarboxylate + H2O2. It carries out the reaction (1R,10aS)-1,4,10,10a-tetrahydrophenazine-1,6-dicarboxylate + O2 = (5aS)-5,5a-dihydrophenazine-1,6-dicarboxylate + H2O2. The enzyme catalyses (1R,10aS)-1,4,10,10a-tetrahydrophenazine-1-carboxylate + O2 = (10aS)-10,10a-dihydrophenazine-1-carboxylate + H2O2. The catalysed reaction is (1R)-1,4,5,10-tetrahydrophenazine-1-carboxylate + O2 = (10aS)-10,10a-dihydrophenazine-1-carboxylate + H2O2. Its pathway is antibiotic biosynthesis; phenazine biosynthesis. Involved in the biosynthesis of the antibiotic phenazine, a nitrogen-containing heterocyclic molecule having important roles in virulence, competition and biological control. Catalyzes several oxidations in the terminal steps of core phenazine biosynthesis. It oxidizes both hexahydrophenazine-1,6-dicarboxylic acid (HHPDC) and tetrahydrophenazine-1-carboxylic acid (THPCA) and thereby contributes to the generation of both phenazine-1,6-dicarboxylic acid (PDC) and phenazine-1-carboxylic acid (PCA). It synthesizes phenazines in their reduced form, which are the likely end products in vivo. The chain is Dihydrophenazinedicarboxylate synthase from Burkholderia lata (strain ATCC 17760 / DSM 23089 / LMG 22485 / NCIMB 9086 / R18194 / 383).